A 264-amino-acid chain; its full sequence is Thymidylate synthase (264 aa).

Arg-21 contacts dUMP. His-51 provides a ligand contact to (6R)-5,10-methylene-5,6,7,8-tetrahydrofolate. 126–127 contributes to the dUMP binding site; sequence RR. The active-site Nucleophile is the Cys-146. Residues 166 to 169, Asn-177, and 207 to 209 each bind dUMP; these read RSAD and HIY. Asp-169 serves as a coordination point for (6R)-5,10-methylene-5,6,7,8-tetrahydrofolate. Ser-263 provides a ligand contact to (6R)-5,10-methylene-5,6,7,8-tetrahydrofolate.

This sequence belongs to the thymidylate synthase family. Bacterial-type ThyA subfamily. Homodimer.

It is found in the cytoplasm. It carries out the reaction dUMP + (6R)-5,10-methylene-5,6,7,8-tetrahydrofolate = 7,8-dihydrofolate + dTMP. It functions in the pathway pyrimidine metabolism; dTTP biosynthesis. Catalyzes the reductive methylation of 2'-deoxyuridine-5'-monophosphate (dUMP) to 2'-deoxythymidine-5'-monophosphate (dTMP) while utilizing 5,10-methylenetetrahydrofolate (mTHF) as the methyl donor and reductant in the reaction, yielding dihydrofolate (DHF) as a by-product. This enzymatic reaction provides an intracellular de novo source of dTMP, an essential precursor for DNA biosynthesis. The chain is Thymidylate synthase from Bacillus velezensis (strain DSM 23117 / BGSC 10A6 / LMG 26770 / FZB42) (Bacillus amyloliquefaciens subsp. plantarum).